A 93-amino-acid polypeptide reads, in one-letter code: Putative aspartate aminotransferase (93 aa).

Belongs to the class-I pyridoxal-phosphate-dependent aminotransferase family. Homodimer. Requires pyridoxal 5'-phosphate as cofactor.

It is found in the cytoplasm. The enzyme catalyses L-aspartate + 2-oxoglutarate = oxaloacetate + L-glutamate. This is Putative aspartate aminotransferase from Methylorubrum extorquens (Methylobacterium dichloromethanicum).